A 506-amino-acid polypeptide reads, in one-letter code: Galactose/methyl galactoside import ATP-binding protein MglA (506 aa).

ABC transporter domains follow at residues 14 to 249 (LTMT…VGRE) and 260 to 506 (VPKE…AKYL). 46–53 (GENGAGKS) is a binding site for ATP.

It belongs to the ABC transporter superfamily. Galactose/methyl galactoside importer (TC 3.A.1.2.3) family. The complex is composed of one ATP-binding protein (MglA), two transmembrane proteins (MglC) and a solute-binding protein (MglB).

It localises to the cell inner membrane. The catalysed reaction is D-galactose(out) + ATP + H2O = D-galactose(in) + ADP + phosphate + H(+). The enzyme catalyses methyl beta-D-galactoside(out) + ATP + H2O = methyl beta-D-galactoside(in) + ADP + phosphate + H(+). Functionally, part of the ABC transporter complex MglABC involved in galactose/methyl galactoside import. Responsible for energy coupling to the transport system. The sequence is that of Galactose/methyl galactoside import ATP-binding protein MglA from Haemophilus influenzae (strain 86-028NP).